A 442-amino-acid polypeptide reads, in one-letter code: MTSSSMTIAALATAPAAGAVGILRLSGPEALDVGRLLAPGVPAQPTPRHAYLASFVDAEGRSLDEGLFLYFRGPQSFTGEDVVELQAHGSPRLLRLLLTRALEDARVRHAAPGEFTRRAFLNGRLDLTRAEAVADLVAADSEAAVRAAAAGLSGALASRVQALEEPLRALHADMEGVLSFPDEAEGADEDVGERVTALRAQAETLLAEVGRGRLVRRGARVALFGPVNAGKSTLFNRLVGEARALVDDEPGTTRDALEARVEWDGLAVTLFDTAGLRETPGRVEALGIARTRALLTGVDLAVLVLPPGVTQAEVEAWTRDVGGTPVLVVDGKCDVAEVSSSPRQRVSGLTGEGVDALRDDMLGRLWGGGTPSAVALVSERHADALRRASEALGRAESASRVSTLEVVSGEVGLALEALGEVSGTVVSEALLDAIFQRFCIGK.

Arginine 24, glutamate 84, and arginine 124 together coordinate (6S)-5-formyl-5,6,7,8-tetrahydrofolate. Residues 218-366 form the TrmE-type G domain; that stretch reads GARVALFGPV…LRDDMLGRLW (149 aa). GTP is bound by residues 228–233, 247–253, and 272–275; these read NAGKST, DDEPGTT, and DTAG. The Mg(2+) site is built by serine 232 and threonine 253. Lysine 442 provides a ligand contact to (6S)-5-formyl-5,6,7,8-tetrahydrofolate.

It belongs to the TRAFAC class TrmE-Era-EngA-EngB-Septin-like GTPase superfamily. TrmE GTPase family. Homodimer. Heterotetramer of two MnmE and two MnmG subunits. K(+) is required as a cofactor.

Its subcellular location is the cytoplasm. Exhibits a very high intrinsic GTPase hydrolysis rate. Involved in the addition of a carboxymethylaminomethyl (cmnm) group at the wobble position (U34) of certain tRNAs, forming tRNA-cmnm(5)s(2)U34. In Myxococcus xanthus (strain DK1622), this protein is tRNA modification GTPase MnmE.